The following is a 392-amino-acid chain: S-adenosylmethionine synthase (392 aa).

Glu10 contributes to the Mg(2+) binding site. His16 serves as a coordination point for ATP. Residue Glu44 coordinates K(+). L-methionine is bound by residues Glu57 and Gln100. ATP is bound by residues 168–170 (DGK), 236–239 (SGRF), Asp247, 253–254 (RK), Ala270, Lys274, and Lys278. Asp247 is a binding site for L-methionine. Position 278 (Lys278) interacts with L-methionine.

This sequence belongs to the AdoMet synthase family. As to quaternary structure, homotetramer. The cofactor is Mn(2+). Requires Mg(2+) as cofactor. Co(2+) serves as cofactor. It depends on K(+) as a cofactor.

It localises to the cytoplasm. The catalysed reaction is L-methionine + ATP + H2O = S-adenosyl-L-methionine + phosphate + diphosphate. It functions in the pathway amino-acid biosynthesis; S-adenosyl-L-methionine biosynthesis; S-adenosyl-L-methionine from L-methionine: step 1/1. Its function is as follows. Catalyzes the formation of S-adenosylmethionine from methionine and ATP. The reaction comprises two steps that are both catalyzed by the same enzyme: formation of S-adenosylmethionine (AdoMet) and triphosphate, and subsequent hydrolysis of the triphosphate. This chain is S-adenosylmethionine synthase (SAMS), found in Phaseolus lunatus (Lima bean).